Consider the following 255-residue polypeptide: F-box/SPRY domain-containing protein 1 (255 aa).

The region spanning 3–51 (DPVAALCNYNVLEVIFSYLELDDLSHCSQVCKSWYHFLNDENSDVWRWH) is the F-box domain. A B30.2/SPRY domain is found at 61–253 (LKSDLLSSVS…VSMVYLGTPL (193 aa)).

The protein belongs to the FBXO45/Fsn family. In terms of assembly, component of an E3 ubiquitin ligase complex composed of hiw and Fsn.

It is found in the synapse. It participates in protein modification; protein ubiquitination. In terms of biological role, required in the presynaptic motoneuron to down-regulate the levels of wnd and restrain synaptic terminal growth at the neuromuscular junction (NMJ). This Drosophila simulans (Fruit fly) protein is F-box/SPRY domain-containing protein 1.